A 292-amino-acid polypeptide reads, in one-letter code: MNTANTLDGKFVTEGSWRPDLFKGKVAFVTGGAGTICRVQTEALVLLGCKAAIVGRDQERTEQAAKGISQLAKDKDAVLAIANVDVRNFEQVENAVKKTVEKFGKIDFVIAGAAGNFVCDFANLSPNAFKSVVDIDLLGSFNTAKACLKELKKSKGSILFVSATFHYYGVPFQGHVGAAKAGIDALAKNLAVELGPLGIRSNCIAPGAIDNTEGLKRLAGKKYKEKALAKIPLQRLGSTRDIAESTVYIFSPAASYVTGTVLVVDGGMWHLGTYFGHELYPEALIKSMTSKL.

The NADP(+) site is built by Ile36, Asp85, and Lys145. The active-site Proton donor is Ser162. Lys180 lines the NADP(+) pocket. Catalysis depends on Lys180, which acts as the Lowers pKa of active site Tyr. A Glycyl lysine isopeptide (Lys-Gly) (interchain with G-Cter in ubiquitin) cross-link involves residue Lys188. Residue Ile209 coordinates NADP(+). The short motif at 290-292 (SKL) is the Microbody targeting signal element.

Belongs to the short-chain dehydrogenases/reductases (SDR) family. In terms of assembly, homodimer.

Its subcellular location is the peroxisome. The catalysed reaction is a (2E,4Z)-dienoyl-CoA + NADPH + H(+) = a 4,5-saturated-(3E)-enoyl-CoA + NADP(+). It catalyses the reaction a (2E,4E)-dienoyl-CoA + NADPH + H(+) = a 4,5-saturated-(3E)-enoyl-CoA + NADP(+). Functionally, auxiliary enzyme of beta-oxidation. Participates in the degradation of unsaturated fatty enoyl-CoA esters having double bonds in both even- and odd-numbered positions in peroxisome. Catalyzes the NADP-dependent reduction of 2,4-dienoyl-CoA to yield trans-3-enoyl-CoA. Dispensable for growth and sporulation on solid acetate and oleate media, but is essential for these processes to occur on petroselineate. The chain is Peroxisomal 2,4-dienoyl-CoA reductase SPS19 [(3E)-enoyl-CoA-producing] (SPS19) from Saccharomyces cerevisiae (strain ATCC 204508 / S288c) (Baker's yeast).